Consider the following 123-residue polypeptide: Large ribosomal subunit protein uL29 (123 aa).

Belongs to the universal ribosomal protein uL29 family. In terms of assembly, component of the large ribosomal subunit.

The protein resides in the cytoplasm. Component of the large ribosomal subunit. The ribosome is a large ribonucleoprotein complex responsible for the synthesis of proteins in the cell. The sequence is that of Large ribosomal subunit protein uL29 (rpl35) from Hippocampus comes (Tiger tail seahorse).